The primary structure comprises 565 residues: MNVHKMKILSLLMVSFISWQARAESVCPEWSEERMSGEMHLLEKQLDQWNIAYHQQGISPIADDIYDQLQDKLHRWRLCLGLPDKTDNRPIPGNGKMLHPVAHTGLKKLKDEAALISWMTGRKNLWVQPKIDGVAVTLVYQAGKLTQVLSRGNGLKGQNWADKAPFISAIPQYIASAPPLLTLQGEVFLQMEGHQQAQSGGANARASVAGALMRKSVSPLLAKLGIFIWAWPDGPKSMVEKSRLLQEMGFPLTAHYSEPVISSSDVALWRDRWFKMPLPFVTDGVVIRQENVPAGRYWQATPGNWSVAWKYPPPQQITEIKDIHFTVGRTGKITAILQVIPVKIDDKWIRRVNIGSIARWKQWDIVPGDQVTISLAGQGIPRLDKVIWRVSQRQEIVPPDADKFHQLTCFRRLPFECEPQFLSRLAWLSGTNGLDMQSVGNGLWRELIHHGFINGLLDWLSLSVEQIAAVPGIGQGRAEKIYQQFQRARQQPFSQWLQALGFPQGIPLDTSWHSLRQRSIAEWRLMPGIGQVRAKQINHFLHHPEVQMMADFLSQQGIAGFSPEE.

Lys130 serves as the catalytic N6-AMP-lysine intermediate.

The protein belongs to the NAD-dependent DNA ligase family. LigB subfamily.

The enzyme catalyses NAD(+) + (deoxyribonucleotide)n-3'-hydroxyl + 5'-phospho-(deoxyribonucleotide)m = (deoxyribonucleotide)n+m + AMP + beta-nicotinamide D-nucleotide.. Its function is as follows. Catalyzes the formation of phosphodiester linkages between 5'-phosphoryl and 3'-hydroxyl groups in double-stranded DNA using NAD as a coenzyme and as the energy source for the reaction. The protein is DNA ligase B of Yersinia enterocolitica serotype O:8 / biotype 1B (strain NCTC 13174 / 8081).